Reading from the N-terminus, the 1092-residue chain is Leukemia inhibitory factor receptor (1092 aa).

A signal peptide spans Met1 to Gly43. Residues Leu44–Ser828 are Extracellular-facing. The Fibronectin type-III 1 domain occupies Lys45 to Asp126. Disulfide bonds link Cys53/Cys63 and Cys80/Cys88. Residues Asn164, Asn199, Asn238, and Asn261 are each glycosylated (N-linked (GlcNAc...) asparagine). 2 cysteine pairs are disulfide-bonded: Cys208/Cys265 and Cys336/Cys346. Fibronectin type-III domains are found at residues Val330 to His429, Asp430 to Thr529, Gly533 to Asp624, Pro622 to Val714, and Pro719 to Ser828. N-linked (GlcNAc...) asparagine glycans are attached at residues Asn385, Asn402, Asn421, Asn440, Asn453, and Asn476. A disulfide bridge connects residues Cys461 and Cys506. The short motif at Trp514–Ser518 is the WSXWS motif element. N-linked (GlcNAc...) asparagine glycans are attached at residues Asn567, Asn647, Asn658, Asn675, Asn724, and Asn782. A helical membrane pass occupies residues Val829 to Cys853. Over Tyr854–Asp1092 the chain is Cytoplasmic. Residues Phe864–Glu872 carry the Box 1 motif motif. 2 positions are modified to phosphoserine: Ser922 and Ser1039. Residues Glu1009–Asp1092 form a disordered region. Polar residues-rich tracts occupy residues Ala1027 to Gln1062 and Ser1081 to Asp1092.

It belongs to the type I cytokine receptor family. Type 2 subfamily. As to quaternary structure, heterodimer composed of LIFR and IL6ST. The heterodimer formed by LIFR and IL6ST interacts with the complex formed by CNTF and CNTFR. In terms of tissue distribution, placenta, liver, kidney, heart, lung, brain, and embryos. The liver may be the primary site of synthesis of the secreted form.

The protein localises to the cell membrane. It is found in the secreted. In terms of biological role, signal-transducing molecule. May have a common pathway with IL6ST. The soluble form inhibits the biological activity of LIF by blocking its binding to receptors on target cells. The polypeptide is Leukemia inhibitory factor receptor (Lifr) (Mus musculus (Mouse)).